A 489-amino-acid polypeptide reads, in one-letter code: Glycogen synthase (489 aa).

K15 serves as a coordination point for ADP-alpha-D-glucose.

It belongs to the glycosyltransferase 1 family. Bacterial/plant glycogen synthase subfamily.

The enzyme catalyses [(1-&gt;4)-alpha-D-glucosyl](n) + ADP-alpha-D-glucose = [(1-&gt;4)-alpha-D-glucosyl](n+1) + ADP + H(+). The protein operates within glycan biosynthesis; glycogen biosynthesis. Its function is as follows. Synthesizes alpha-1,4-glucan chains using ADP-glucose. The polypeptide is Glycogen synthase (Francisella tularensis subsp. tularensis (strain SCHU S4 / Schu 4)).